Here is a 94-residue protein sequence, read N- to C-terminus: Translation initiation factor 1A 2 (94 aa).

The S1-like domain occupies 6 to 80; sequence GRRNLRMPSD…EKANIEWRYS (75 aa).

It belongs to the eIF-1A family.

Seems to be required for maximal rate of protein biosynthesis. Enhances ribosome dissociation into subunits and stabilizes the binding of the initiator Met-tRNA(I) to 40 S ribosomal subunits. This Haloquadratum walsbyi (strain DSM 16790 / HBSQ001) protein is Translation initiation factor 1A 2.